The sequence spans 184 residues: Endothelial cell-specific molecule 1 (184 aa).

Positions 1-19 (MKSVLLLTTLLVPAHLVAA) are cleaved as a signal peptide. In terms of domain architecture, IGFBP N-terminal spans 24 to 102 (YAVDCPQHCD…GEEFGICKDC (79 aa)). 6 cysteine pairs are disulfide-bonded: C28–C51, C32–C53, C37–C54, C43–C57, C65–C83, and C77–C99. O-linked (Xyl...) (chondroitin sulfate) serine glycosylation is present at S156.

In terms of assembly, monomer. May contain intrachain disulfide bonds. Post-translationally, O-glycosylated; contains chondroitin sulfate and dermatan sulfate. As to expression, expressed in lung, on the vascular capillary network within alveolar walls, and also at lower level in kidney.

Its subcellular location is the secreted. In terms of biological role, involved in angiogenesis; promotes angiogenic sprouting. May have potent implications in lung endothelial cell-leukocyte interactions. This is Endothelial cell-specific molecule 1 (ESM1) from Homo sapiens (Human).